Consider the following 752-residue polypeptide: Zinc finger protein 184 (752 aa).

Positions 28 to 99 (VTFKDVIVDF…EPSIPVGTPG (72 aa)) constitute a KRAB domain. Serine 117, serine 122, and serine 200 each carry phosphoserine. Lysine 207 participates in a covalent cross-link: Glycyl lysine isopeptide (Lys-Gly) (interchain with G-Cter in SUMO2). 19 consecutive C2H2-type zinc fingers follow at residues 223 to 245 (CKCNECGKAFTYCSALIRHQRTH), 251 to 273 (YKCNECEKAFSRSENLINHQRIH), 279 to 301 (YKCDQCGKGFIEGPSLTQHQRIH), 307 to 329 (YKCDECGKAFSQRTHLVQHQRIH), 335 to 357 (YTCNECGKAFSQRGHFMEHQKIH), 363 to 385 (FKCDECDKTFTRSTHLTQHQKIH), 391 to 413 (YKCNECGKAFNGPSTFIRHHMIH), 419 to 441 (YECNECGKAFSQHSNLTQHQKTH), 447 to 469 (YDCAECGKSFSYWSSLAQHLKIH), 475 to 497 (YKCNECGKAFSYCSSLTQHRRIH), 503 to 525 (FECSECGKAFSYLSNLNQHQKTH), 531 to 553 (YECKECGKAFIRSSSLAKHERIH), 559 to 581 (YQCHECGKTFSYGSSLIQHRKIH), 587 to 609 (YKCNECGRAFNQNIHLTQHKRIH), 615 to 637 (YECAECGKAFRHCSSLAQHQKTH), 643 to 665 (YHCNKCEKAFSQSSHLAQHQRIH), 671 to 693 (YKCNECDKTFSRSTHLTEHQNTH), 699 to 721 (YNCNECRKTFSQSTYLIQHQRIH), and 727 to 749 (FGCNDCGKAFRYRSALNKHQRLH).

It belongs to the krueppel C2H2-type zinc-finger protein family.

The protein resides in the nucleus. May be involved in transcriptional regulation. The sequence is that of Zinc finger protein 184 (ZNF184) from Bos taurus (Bovine).